Here is a 612-residue protein sequence, read N- to C-terminus: Methionine--tRNA ligase (612 aa).

Residues P12–H22 carry the 'HIGH' region motif. C144, C147, C157, and C160 together coordinate Zn(2+). The 'KMSKS' region signature appears at K350 to S354. S353 contacts ATP. The segment at I580 to K612 is disordered.

It belongs to the class-I aminoacyl-tRNA synthetase family. MetG type 1 subfamily. Monomer. The cofactor is Zn(2+).

Its subcellular location is the cytoplasm. The catalysed reaction is tRNA(Met) + L-methionine + ATP = L-methionyl-tRNA(Met) + AMP + diphosphate. Its function is as follows. Is required not only for elongation of protein synthesis but also for the initiation of all mRNA translation through initiator tRNA(fMet) aminoacylation. The sequence is that of Methionine--tRNA ligase from Corynebacterium jeikeium (strain K411).